Consider the following 208-residue polypeptide: Small ribosomal subunit protein uS5 (208 aa).

Residues 1–38 are disordered; it reads MPGRERRDGGRSADDNQKKNDRRGGRRDDRRNQQQDER. The 64-residue stretch at 41-104 folds into the S5 DRBM domain; it reads YIERVVTINR…EEARKNFFRV (64 aa).

The protein belongs to the universal ribosomal protein uS5 family. As to quaternary structure, part of the 30S ribosomal subunit. Contacts proteins S4 and S8.

In terms of biological role, with S4 and S12 plays an important role in translational accuracy. Its function is as follows. Located at the back of the 30S subunit body where it stabilizes the conformation of the head with respect to the body. This is Small ribosomal subunit protein uS5 from Corynebacterium diphtheriae (strain ATCC 700971 / NCTC 13129 / Biotype gravis).